The chain runs to 531 residues: O-phosphoserine--tRNA(Cys) ligase (531 aa).

Substrate is bound by residues 189–191 (HMT), 234–236 (SAS), 276–277 (YY), and asparagine 319.

It belongs to the class-II aminoacyl-tRNA synthetase family. O-phosphoseryl-tRNA(Cys) synthetase subfamily. As to quaternary structure, homotetramer. Interacts with SepCysS.

It catalyses the reaction tRNA(Cys) + O-phospho-L-serine + ATP = O-phospho-L-seryl-tRNA(Cys) + AMP + diphosphate. In terms of biological role, catalyzes the attachment of O-phosphoserine (Sep) to tRNA(Cys). This chain is O-phosphoserine--tRNA(Cys) ligase, found in Methanoculleus marisnigri (strain ATCC 35101 / DSM 1498 / JR1).